Here is a 945-residue protein sequence, read N- to C-terminus: Valine--tRNA ligase (945 aa).

Positions 42-52 (PNVTGTLHMGH) match the 'HIGH' region motif. The 'KMSKS' region motif lies at 552–556 (KMSKS). Lys-555 is a binding site for ATP. Residues 879 to 945 (DKAAETARLS…VQNQLAKLKD (67 aa)) adopt a coiled-coil conformation.

It belongs to the class-I aminoacyl-tRNA synthetase family. ValS type 1 subfamily. Monomer.

It localises to the cytoplasm. The enzyme catalyses tRNA(Val) + L-valine + ATP = L-valyl-tRNA(Val) + AMP + diphosphate. Functionally, catalyzes the attachment of valine to tRNA(Val). As ValRS can inadvertently accommodate and process structurally similar amino acids such as threonine, to avoid such errors, it has a 'posttransfer' editing activity that hydrolyzes mischarged Thr-tRNA(Val) in a tRNA-dependent manner. The polypeptide is Valine--tRNA ligase (Neisseria gonorrhoeae (strain ATCC 700825 / FA 1090)).